Consider the following 273-residue polypeptide: Probable glycerophosphodiester phosphodiesterase GpdQ (273 aa).

Residues aspartate 8, histidine 10, aspartate 50, asparagine 80, histidine 154, histidine 194, and histidine 196 each contribute to the Fe cation site.

This sequence belongs to the cyclic nucleotide phosphodiesterase class-III family. Fe(2+) is required as a cofactor.

The catalysed reaction is a sn-glycero-3-phosphodiester + H2O = an alcohol + sn-glycerol 3-phosphate + H(+). It carries out the reaction sn-glycero-3-phosphoethanolamine + H2O = ethanolamine + sn-glycerol 3-phosphate + H(+). Functionally, catalyzes the hydrolysis of the 3'-5' phosphodiester bond of glycerophosphodiesters such as glycerophosphorylethanolamine (GPE), a typical phospholipid metabolite. In Arcobacter nitrofigilis (strain ATCC 33309 / DSM 7299 / CCUG 15893 / LMG 7604 / NCTC 12251 / CI) (Campylobacter nitrofigilis), this protein is Probable glycerophosphodiester phosphodiesterase GpdQ.